The primary structure comprises 262 residues: tRNA pseudouridine synthase A (262 aa).

Asp55 acts as the Nucleophile in catalysis. A substrate-binding site is contributed by Tyr116.

Belongs to the tRNA pseudouridine synthase TruA family. In terms of assembly, homodimer.

It carries out the reaction uridine(38/39/40) in tRNA = pseudouridine(38/39/40) in tRNA. Formation of pseudouridine at positions 38, 39 and 40 in the anticodon stem and loop of transfer RNAs. The protein is tRNA pseudouridine synthase A of Bdellovibrio bacteriovorus (strain ATCC 15356 / DSM 50701 / NCIMB 9529 / HD100).